The sequence spans 191 residues: Ubiquinol-cytochrome c reductase iron-sulfur subunit (191 aa).

The helical transmembrane segment at Ala-18–Ile-35 threads the bilayer. One can recognise a Rieske domain in the interval Arg-94 to Lys-189. The tract at residues Asp-95–Pro-116 is disordered. 4 residues coordinate [2Fe-2S] cluster: Cys-133, His-135, Cys-153, and His-156. An intrachain disulfide couples Cys-138 to Cys-155.

It belongs to the Rieske iron-sulfur protein family. As to quaternary structure, the main subunits of complex b-c1 are: cytochrome b, cytochrome c1 and the Rieske protein. [2Fe-2S] cluster serves as cofactor.

It localises to the cell membrane. The enzyme catalyses a quinol + 2 Fe(III)-[cytochrome c](out) = a quinone + 2 Fe(II)-[cytochrome c](out) + 2 H(+)(out). Its function is as follows. Component of the ubiquinol-cytochrome c reductase complex (complex III or cytochrome b-c1 complex), which is a respiratory chain that generates an electrochemical potential coupled to ATP synthesis. The protein is Ubiquinol-cytochrome c reductase iron-sulfur subunit (petA) of Rhodobacter capsulatus (strain ATCC BAA-309 / NBRC 16581 / SB1003).